We begin with the raw amino-acid sequence, 315 residues long: Transaldolase (315 aa).

Catalysis depends on K125, which acts as the Schiff-base intermediate with substrate.

This sequence belongs to the transaldolase family. Type 1 subfamily. Homodimer.

The protein localises to the cytoplasm. The catalysed reaction is D-sedoheptulose 7-phosphate + D-glyceraldehyde 3-phosphate = D-erythrose 4-phosphate + beta-D-fructose 6-phosphate. The protein operates within carbohydrate degradation; pentose phosphate pathway; D-glyceraldehyde 3-phosphate and beta-D-fructose 6-phosphate from D-ribose 5-phosphate and D-xylulose 5-phosphate (non-oxidative stage): step 2/3. In terms of biological role, transaldolase is important for the balance of metabolites in the pentose-phosphate pathway. In Polaromonas sp. (strain JS666 / ATCC BAA-500), this protein is Transaldolase.